The primary structure comprises 305 residues: Aurasperone B biosynthesis cluster protein A (305 aa).

The first 26 residues, 1 to 26 (MSIFFSIRFWPAAISAAILWLPQVLG), serve as a signal peptide directing secretion. Residues N29, N34, N64, N83, N132, N183, N218, and N288 are each glycosylated (N-linked (GlcNAc...) asparagine).

It belongs to the bfoA family.

In terms of biological role, part of the gene cluster that mediates the biosynthesis of aurasperone B, a dimeric gamma-naphthopyrone. The first step in the biosynthesis of aurasperone B is the production of gamma-naphthopyrone precursor YWA1 by the non-reducing polyketide synthase albA, via condensation of one acetyl-CoA starter unit with 6 malonyl-CoA units. YWA1 is then methylated by aunE at position C-6 to yield foncesin which is further methylated at position C-8 by aunD to produce fonsecin B. A key enzyme in the biosynthetic pathway is the cytochrome P450 monooxygenase aunB which catalyzes the oxidative dimerization of fonsecin B to aurasperone B. AunB also catalyzes the oxidative dimerization of rubrofusarin B into aurasperone A. The polypeptide is Aurasperone B biosynthesis cluster protein A (Aspergillus niger (strain ATCC MYA-4892 / CBS 513.88 / FGSC A1513)).